Reading from the N-terminus, the 81-residue chain is MVKKEAVRTDSTEDNSVDNVQARSNFIAATKDELAKVVWPSRQQLISESVAVILMVILVSTVIYFVDQIFGWITKQPFLFG.

A helical transmembrane segment spans residues 50–70 (VAVILMVILVSTVIYFVDQIF).

This sequence belongs to the SecE/SEC61-gamma family. In terms of assembly, component of the Sec protein translocase complex. Heterotrimer consisting of SecY, SecE and SecG subunits. The heterotrimers can form oligomers, although 1 heterotrimer is thought to be able to translocate proteins. Interacts with the ribosome. Interacts with SecDF, and other proteins may be involved. Interacts with SecA.

It is found in the cell inner membrane. It localises to the cellular thylakoid membrane. Functionally, essential subunit of the Sec protein translocation channel SecYEG. Clamps together the 2 halves of SecY. May contact the channel plug during translocation. The sequence is that of Protein translocase subunit SecE from Synechocystis sp. (strain ATCC 27184 / PCC 6803 / Kazusa).